Reading from the N-terminus, the 296-residue chain is Uracil phosphoribosyltransferase, chloroplastic (296 aa).

The N-terminal 61 residues, 1 to 61, are a transit peptide targeting the chloroplast; sequence MACSIGNAFR…SSSLSRRTIR (61 aa). An N-acetylalanine modification is found at alanine 2. 148–151 provides a ligand contact to GTP; it reads REPI. 5-phospho-alpha-D-ribose 1-diphosphate-binding positions include arginine 158, arginine 183, aspartate 211, 216–219, and aspartate 282; that span reads TGGT. A uracil-binding site is contributed by 281-283; it reads GDA.

This sequence belongs to the UPRTase family. Requires Mg(2+) as cofactor.

The protein resides in the plastid. The protein localises to the chloroplast. It catalyses the reaction UMP + diphosphate = 5-phospho-alpha-D-ribose 1-diphosphate + uracil. It functions in the pathway pyrimidine metabolism; UMP biosynthesis via salvage pathway; UMP from uracil: step 1/1. With respect to regulation, allosterically activated by GTP. Uracil phosphoribosyltransferase (UPRT) that catalyzes the conversion of uracil and 5-phospho-alpha-D-ribose 1-diphosphate (PRPP) to UMP and diphosphate. Is probably the only functional UPRT, since the dual-domain proteins of the UKL family seem to lack this activity. This chain is Uracil phosphoribosyltransferase, chloroplastic (UPP), found in Arabidopsis thaliana (Mouse-ear cress).